Consider the following 88-residue polypeptide: Small ribosomal subunit protein uS15 (88 aa).

Belongs to the universal ribosomal protein uS15 family. Part of the 30S ribosomal subunit. Forms a bridge to the 50S subunit in the 70S ribosome, contacting the 23S rRNA.

Its function is as follows. One of the primary rRNA binding proteins, it binds directly to 16S rRNA where it helps nucleate assembly of the platform of the 30S subunit by binding and bridging several RNA helices of the 16S rRNA. In terms of biological role, forms an intersubunit bridge (bridge B4) with the 23S rRNA of the 50S subunit in the ribosome. The protein is Small ribosomal subunit protein uS15 of Flavobacterium johnsoniae (strain ATCC 17061 / DSM 2064 / JCM 8514 / BCRC 14874 / CCUG 350202 / NBRC 14942 / NCIMB 11054 / UW101) (Cytophaga johnsonae).